Consider the following 427-residue polypeptide: Fc receptor-like B (427 aa).

The first 17 residues, 1–17 (MWMLAALLLLVPRSGKA), serve as a signal peptide directing secretion. Ig-like C2-type domains lie at 23–101 (PVLT…LSVS) and 103–189 (DWLI…VAVT). 2 cysteine pairs are disulfide-bonded: C44/C85 and C124/C168. N-linked (GlcNAc...) asparagine glycosylation is present at N152. The span at 401–418 (TPETPNSHVTVNPATPET) shows a compositional bias: polar residues. Residues 401-427 (TPETPNSHVTVNPATPETTVMEGRVDS) are disordered.

Expressed at low levels. Expressed in B-lymphocytes. Detected in spleen, lymph node, kidney, lung and brain.

It localises to the cytoplasm. The protein localises to the endoplasmic reticulum. The sequence is that of Fc receptor-like B (Fcrlb) from Mus musculus (Mouse).